A 279-amino-acid chain; its full sequence is Tryptophan synthase alpha chain (279 aa).

Residues glutamate 50 and aspartate 61 each act as proton acceptor in the active site.

Belongs to the TrpA family. In terms of assembly, tetramer of two alpha and two beta chains.

The enzyme catalyses (1S,2R)-1-C-(indol-3-yl)glycerol 3-phosphate + L-serine = D-glyceraldehyde 3-phosphate + L-tryptophan + H2O. It participates in amino-acid biosynthesis; L-tryptophan biosynthesis; L-tryptophan from chorismate: step 5/5. The alpha subunit is responsible for the aldol cleavage of indoleglycerol phosphate to indole and glyceraldehyde 3-phosphate. The protein is Tryptophan synthase alpha chain of Rhizobium meliloti (strain 1021) (Ensifer meliloti).